The following is a 428-amino-acid chain: MAENDVDNELLDYEDDEVETAAGADGTEAPAKKDVKGSYVSIHSSGFRDFLLKPELLRAIVDCGFEHPSEVQHECIPQAILGMDVLCQAKSGMGKTAVFVLATLQQLEPVTGQVSVLVMCHTRELAFQISKEYERFSKYMPNVKVAVFFGGLSIKKDEEVLKKNCPHIVVGTPGRILALARNKSLNLKHIKHFILDECDKMLEQLDMRRDVQEIFRMTPHEKQVMMFSATLSKEIRPVCRKFMQDPMEIFVDDETKLTLHGLQQYYVKLKDNEKNRKLFDLLDVLEFNQVVIFVKSVQRCIALAQLLVEQNFPAIAIHRGMPQEERLSRYQQFKDFQRRILVATNLFGRGMDIERVNIAFNYDMPEDSDTYLHRVARAGRFGTKGLAITFVSDENDAKILNDVQDRFEVNISELPDEIDISSYIEQTR.

The span at Met-1–Glu-19 shows a compositional bias: acidic residues. A disordered region spans residues Met-1 to Ala-31. Ala-2 carries the post-translational modification N-acetylalanine. Lys-36 carries the N6-acetyllysine; alternate modification. Residue Lys-36 forms a Glycyl lysine isopeptide (Lys-Gly) (interchain with G-Cter in SUMO2); alternate linkage. Residues Ser-38 and Ser-41 each carry the phosphoserine modification. The Q motif motif lies at Ser-45–His-73. In terms of domain architecture, Helicase ATP-binding spans Ile-76–Ile-249. Position 89–96 (Ala-89–Thr-96) interacts with ATP. Thr-172 bears the Phosphothreonine mark. The DECD box motif lies at Asp-196 to Asp-199. Residues Gly-261 to Ser-422 form the Helicase C-terminal domain.

It belongs to the DEAD box helicase family. DECD subfamily. As to quaternary structure, homodimer, and heterodimer with DDX39A. DDX39B interacts with the THO subcomplex to form the THO-DDX39B complex which multimerizes into a 28-subunit tetrameric assembly. Component of the transcription/export (TREX) complex at least composed of ALYREF/THOC4, DDX39B, SARNP/CIP29, CHTOP and the THO subcomplex; in the complex interacts with THOC2. THOC1-THOC2-THOC3-DDX39B subcomplex is sufficient for the interaction with export factor NXF1-NXT1. TREX seems to have a dynamic structure involving ATP-dependent remodeling. Within the TREX complex bridges ALYREF/THOC4 and the THO subcomplex, and, in a ATP-dependent manner, ALYREF/THOC4 and SARNP/CIP29. Component of the spliceosome. Interacts directly with U2AF2. Interacts with RBM8A, RNPS1 and SRRM1, FYTTD1/UIF, THOC1, MX1 and POLDIP3. Interacts with LUZP4. Interacts with SARNP/CIP29 (via the C-terminal domain); the interaction is direct and facilitates RNA binding of DDX39B.

Its subcellular location is the nucleus. It is found in the nucleus speckle. It localises to the cytoplasm. It carries out the reaction ATP + H2O = ADP + phosphate + H(+). In terms of biological role, involved in nuclear export of spliced and unspliced mRNA. Component of the TREX complex which is thought to couple mRNA transcription, processing and nuclear export, and specifically associates with spliced mRNA and not with unspliced pre-mRNA. The TREX complex is recruited to spliced mRNAs by a transcription-independent mechanism, binds to mRNA upstream of the exon-junction complex (EJC) and is recruited in a splicing- and cap-dependent manner to a region near the 5' end of the mRNA where it functions in mRNA export to the cytoplasm via the TAP/NXF1 pathway. The THOC1-THOC2-THOC3 core complex alone is sufficient to promote ATPase activity of DDX39B; in the complex THOC2 is the only component that directly interacts with DDX39B. Associates with SARNP/CIP29, which facilitates RNA binding of DDX39B and likely plays a role in mRNA export. May undergo several rounds of ATP hydrolysis during assembly of TREX to drive subsequent loading of components such as ALYREF/THOC4 and CHTOP onto mRNA. Also associates with pre-mRNA independent of ALYREF/THOC4. Involved in the nuclear export of intronless mRNA; the ATP-bound form is proposed to recruit export adapter ALYREF/THOC4 to intronless mRNA; its ATPase activity is cooperatively stimulated by RNA and ALYREF/THOC4 and ATP hydrolysis is thought to trigger the dissociation from RNA to allow the association of ALYREF/THOC4 and the NXF1-NXT1 heterodimer. Involved in transcription elongation and genome stability. Its function is as follows. Splice factor that is required for the first ATP-dependent step in spliceosome assembly and for the interaction of U2 snRNP with the branchpoint. Has both RNA-stimulated ATP binding/hydrolysis activity and ATP-dependent RNA unwinding activity. Even with the stimulation of RNA, the ATPase activity is weak. Can only hydrolyze ATP but not other NTPs. The RNA stimulation of ATPase activity does not have a strong preference for the sequence and length of the RNA. However, ssRNA stimulates the ATPase activity much more strongly than dsRNA. Can unwind 5' or 3' overhangs or blunt end RNA duplexes in vitro. The ATPase and helicase activities are not influenced by U2AF2; the effect of ALYREF/THOC4 is reported conflictingly. The sequence is that of Spliceosome RNA helicase Ddx39b (Ddx39b) from Mus musculus (Mouse).